Here is a 221-residue protein sequence, read N- to C-terminus: MPVMRLFPCFLQLLAGLALPAVPPQQWALSAGNGSSEVEVVPFQEVWGRSYCRALERLVDVVSEYPSEVEHMFSPSCVSLLRCTGCCGDENLHCVPVETANVTMQLLKIRSGDRPSYVELTFSQHVRCECRHSPGRQSPDMPGDFRADAPSFLPPRRSLPMLFRMEWGCALTGSQSAVWPSSPVPEEIPRMHPGRNGKKQQRKPLREKMKPERCGDAVPRR.

Positions 1 to 18 are cleaved as a signal peptide; sequence MPVMRLFPCFLQLLAGLA. Residue Asn33 is glycosylated (N-linked (GlcNAc...) asparagine). Disulfide bonds link Cys52/Cys94, Cys83/Cys128, and Cys87/Cys130. Asn101 is a glycosylation site (N-linked (GlcNAc...) asparagine). Residues 175-221 are disordered; the sequence is QSAVWPSSPVPEEIPRMHPGRNGKKQQRKPLREKMKPERCGDAVPRR. Residues 192–203 are compositionally biased toward basic residues; it reads HPGRNGKKQQRK. The segment at 193-213 is heparin-binding; that stretch reads PGRNGKKQQRKPLREKMKPER. A compositionally biased stretch (basic and acidic residues) spans 204-221; sequence PLREKMKPERCGDAVPRR.

This sequence belongs to the PDGF/VEGF growth factor family. In terms of assembly, antiparallel homodimer; disulfide-linked. Also found as heterodimer with VEGFA/VEGF. Isoform PlGF-3 is found both as homodimer and as monomer. N-glycosylated. As to expression, while the three isoforms are present in most placental tissues, PlGF-2 is specific to early (8 week) placenta and only PlGF-1 is found in the colon and mammary carcinomas.

The protein resides in the secreted. Functionally, growth factor active in angiogenesis and endothelial cell growth, stimulating their proliferation and migration. It binds to the receptor FLT1/VEGFR-1. Isoform PlGF-2 binds NRP1/neuropilin-1 and NRP2/neuropilin-2 in a heparin-dependent manner. Also promotes cell tumor growth. The sequence is that of Placenta growth factor (PGF) from Homo sapiens (Human).